The sequence spans 352 residues: Uroporphyrinogen decarboxylase (352 aa).

Substrate is bound by residues 26–30 (RQAGR), Asp76, Tyr153, Ser208, and His323.

This sequence belongs to the uroporphyrinogen decarboxylase family. As to quaternary structure, homodimer.

It localises to the cytoplasm. The enzyme catalyses uroporphyrinogen III + 4 H(+) = coproporphyrinogen III + 4 CO2. Its pathway is porphyrin-containing compound metabolism; protoporphyrin-IX biosynthesis; coproporphyrinogen-III from 5-aminolevulinate: step 4/4. Its function is as follows. Catalyzes the decarboxylation of four acetate groups of uroporphyrinogen-III to yield coproporphyrinogen-III. In Prochlorococcus marinus (strain NATL1A), this protein is Uroporphyrinogen decarboxylase.